The chain runs to 263 residues: MDYRWIQMKVITFSIAKGGTGKTIITANAAAALAKKGKKILLIDGDVGSKSLSHLLNVKSNIFLADIIEEERPIKDAIVNTPIENIELLAVGKSLADYLKFDINILKRFKELGDYDYVFIDAPSTSSGVETYLALGLSDYFIPVLDYTAFGPSLQGAINTIVIGKNYLESTPAGFIINKAEDLPESVINDIKKILGLECISIIHKNSLVEQSYAKKEIVYLTSSDKKFVEEIDKIVDALEKLKEVKERDIPKVIEKIKESTLL.

An ATP-binding site is contributed by 16–23; that stretch reads AKGGTGKT.

To M.jannaschii MJ0547 and MJ0169.

This is an uncharacterized protein from Methanocaldococcus jannaschii (strain ATCC 43067 / DSM 2661 / JAL-1 / JCM 10045 / NBRC 100440) (Methanococcus jannaschii).